The chain runs to 155 residues: SsrA-binding protein (155 aa).

Belongs to the SmpB family.

The protein resides in the cytoplasm. Functionally, required for rescue of stalled ribosomes mediated by trans-translation. Binds to transfer-messenger RNA (tmRNA), required for stable association of tmRNA with ribosomes. tmRNA and SmpB together mimic tRNA shape, replacing the anticodon stem-loop with SmpB. tmRNA is encoded by the ssrA gene; the 2 termini fold to resemble tRNA(Ala) and it encodes a 'tag peptide', a short internal open reading frame. During trans-translation Ala-aminoacylated tmRNA acts like a tRNA, entering the A-site of stalled ribosomes, displacing the stalled mRNA. The ribosome then switches to translate the ORF on the tmRNA; the nascent peptide is terminated with the 'tag peptide' encoded by the tmRNA and targeted for degradation. The ribosome is freed to recommence translation, which seems to be the essential function of trans-translation. The sequence is that of SsrA-binding protein from Streptococcus suis (strain 98HAH33).